A 427-amino-acid polypeptide reads, in one-letter code: N-acylglucosamine 2-epimerase (427 aa).

Residues 195-216 form a leucine-zipper region; it reads LLNLVEQLGEADEELAGKYAEL.

It belongs to the N-acylglucosamine 2-epimerase family. Homodimer. Forms a heterodimer with renin and inhibits its activity.

The catalysed reaction is an N-acyl-D-glucosamine = an N-acyl-D-mannosamine. It participates in amino-sugar metabolism; N-acetylneuraminate degradation. Inhibited by N-ethylmaleimide, 5,5'-dithiobis-2-nitrobenzoate and iodoacetic acid. In terms of biological role, catalyzes the interconversion of N-acetylglucosamine to N-acetylmannosamine. Involved in the N-glycolylneuraminic acid (Neu5Gc) degradation pathway: although human is not able to catalyze formation of Neu5Gc due to the inactive CMAHP enzyme, Neu5Gc is present in food and must be degraded. This Homo sapiens (Human) protein is N-acylglucosamine 2-epimerase (RENBP).